Here is a 597-residue protein sequence, read N- to C-terminus: DDB1- and CUL4-associated factor 8 (597 aa).

Over residues 1–24 the composition is skewed to polar residues; it reads MSSKGSSTDGRTDLANGSLSSSPE. Residues 1-147 form a disordered region; that stretch reads MSSKGSSTDG…DWVSSETSAL (147 aa). Ser-21 and Ser-22 each carry phosphoserine. Positions 39–50 match the Nuclear export signal motif; the sequence is IEVEASDLSLSL. The segment covering 65–99 has biased composition (basic and acidic residues); the sequence is RGTDTESSGEDKDSDSMEDTGHYSINDENRVHDRS. At Ser-99 the chain carries Phosphoserine. Positions 100–112 are enriched in acidic residues; the sequence is EEEEEEEEEEEEE. The short motif at 114–122 is the Nuclear localization signal element; that stretch reads PRRRVQRKR. The span at 124-137 shows a compositional bias: basic and acidic residues; that stretch reads NRDQDSSDDERALE. 2 positions are modified to phosphoserine: Ser-129 and Ser-130. WD repeat units follow at residues 191–230, 234–275, 281–321, 329–369, 385–424, 432–472, and 476–515; these read GHTGCVNTLHFNQRGTWLASGSDDLKVVVWDWVRRQPVLD, GHKS…CCKN, QHKG…PASK, EKKV…ENEN, ESKANITCLVYSHDGTELLASYNDEDIYLFNSSHSDGAQY, RNNA…IIQF, and DKGGVVNCLEPHPHLPVLATSGLDHDVKIWAPTAEASTEL. An Omega-N-methylarginine; by PRMT1 modification is found at Arg-204. Residues 558-597 are disordered; sequence HRRWREPGVGATDADSDESPSSSDTSDEEEGPDRVQCMPS.

The protein belongs to the WD repeat DCAF8 family. As to quaternary structure, interacts with DDB1, CUL4A and CUL4B. Interacts with KPNA1, KPNB1 and XPO1.

It is found in the nucleus. Its subcellular location is the cytoplasm. Its pathway is protein modification; protein ubiquitination. Functionally, may function as a substrate receptor for CUL4-DDB1 E3 ubiquitin-protein ligase complex. In Homo sapiens (Human), this protein is DDB1- and CUL4-associated factor 8 (DCAF8).